The primary structure comprises 87 residues: Diazepam-binding inhibitor-like 5 (87 aa).

The ACB domain maps to 2 to 87; that stretch reads SQVEFEMACA…VEELKKKEPC (86 aa). An acyl-CoA is bound by residues 29 to 33, lysine 55, and tyrosine 74; that span reads YSFYK.

This sequence belongs to the ACBP family. In terms of tissue distribution, exclusively expressed in late spermatids and spermatozoa. Not found in epididymis, spleen, bone marrow, skin, liver, brain, heart, kidney, muscle.

It is found in the cytoplasm. In terms of biological role, may be involved in the energy metabolism of the mature sperm. This is Diazepam-binding inhibitor-like 5 (Dbil5) from Mus musculus (Mouse).